Here is a 282-residue protein sequence, read N- to C-terminus: tRNA N(3)-cytidine methyltransferase METTL6 (282 aa).

Trp45, Tyr49, Gly87, Asp110, Asp136, Leu137, and Ile157 together coordinate S-adenosyl-L-methionine.

It belongs to the methyltransferase superfamily. METL family. Monomer. Interacts with SARS1/SerRS; interaction is mediated via tRNA(Ser) and is required for N(3)-methylcytidine methylation.

The protein localises to the cytoplasm. Its subcellular location is the nucleus. It carries out the reaction cytidine(32) in tRNA(Ser) + S-adenosyl-L-methionine = N(3)-methylcytidine(32) in tRNA(Ser) + S-adenosyl-L-homocysteine + H(+). S-adenosyl-L-methionine-dependent methyltransferase that mediates N(3)-methylcytidine modification of residue 32 of the tRNA anticodon loop of tRNA(Ser), including tRNA(Ser)(UGA) and tRNA(Ser)(GCU). Interaction with SARS1/SerRS is required for N(3)-methylcytidine methylation. The chain is tRNA N(3)-cytidine methyltransferase METTL6 (METTL6) from Pongo abelii (Sumatran orangutan).